A 154-amino-acid polypeptide reads, in one-letter code: Myoglobin (154 aa).

In terms of domain architecture, Globin spans 2-148 (GLSDGEWQLV…FRNDIAAKYK (147 aa)). A Phosphoserine modification is found at Ser-4. His-65 contacts nitrite. Residue His-65 participates in O2 binding. Thr-68 is subject to Phosphothreonine. His-94 provides a ligand contact to heme b.

It belongs to the globin family. Monomeric.

The protein resides in the cytoplasm. Its subcellular location is the sarcoplasm. It catalyses the reaction Fe(III)-heme b-[protein] + nitric oxide + H2O = Fe(II)-heme b-[protein] + nitrite + 2 H(+). The catalysed reaction is H2O2 + AH2 = A + 2 H2O. Monomeric heme protein which primary function is to store oxygen and facilitate its diffusion within muscle tissues. Reversibly binds oxygen through a pentacoordinated heme iron and enables its timely and efficient release as needed during periods of heightened demand. Depending on the oxidative conditions of tissues and cells, and in addition to its ability to bind oxygen, it also has a nitrite reductase activity whereby it regulates the production of bioactive nitric oxide. Under stress conditions, like hypoxia and anoxia, it also protects cells against reactive oxygen species thanks to its pseudoperoxidase activity. This chain is Myoglobin (MB), found in Otolemur crassicaudatus (Brown greater galago).